Consider the following 163-residue polypeptide: Large ribosomal subunit protein uL10 (163 aa).

It belongs to the universal ribosomal protein uL10 family. As to quaternary structure, part of the ribosomal stalk of the 50S ribosomal subunit. The N-terminus interacts with L11 and the large rRNA to form the base of the stalk. The C-terminus forms an elongated spine to which L12 dimers bind in a sequential fashion forming a multimeric L10(L12)X complex.

Functionally, forms part of the ribosomal stalk, playing a central role in the interaction of the ribosome with GTP-bound translation factors. This is Large ribosomal subunit protein uL10 from Blochmanniella pennsylvanica (strain BPEN).